A 236-amino-acid polypeptide reads, in one-letter code: Ribosomal RNA small subunit methyltransferase G (236 aa).

S-adenosyl-L-methionine-binding positions include G80, 131-132 (AE), and R148.

It belongs to the methyltransferase superfamily. RNA methyltransferase RsmG family.

It is found in the cytoplasm. In terms of biological role, specifically methylates the N7 position of a guanine in 16S rRNA. This chain is Ribosomal RNA small subunit methyltransferase G, found in Ureaplasma parvum serovar 3 (strain ATCC 27815 / 27 / NCTC 11736).